Reading from the N-terminus, the 393-residue chain is Branched-chain-amino-acid aminotransferase, mitochondrial (393 aa).

Residues 1-27 constitute a mitochondrion transit peptide; sequence MSAAILGQVWTRKLLPIPWRLCVPGRC. Residue tyrosine 169 coordinates substrate. Position 230 is an N6-(pyridoxal phosphate)lysine (lysine 230). Residue lysine 322 is modified to N6-acetyllysine.

This sequence belongs to the class-IV pyridoxal-phosphate-dependent aminotransferase family. As to quaternary structure, homodimer. Pyridoxal 5'-phosphate is required as a cofactor. As to expression, expressed in all tissues.

The protein resides in the mitochondrion. It carries out the reaction L-leucine + 2-oxoglutarate = 4-methyl-2-oxopentanoate + L-glutamate. It catalyses the reaction L-isoleucine + 2-oxoglutarate = (S)-3-methyl-2-oxopentanoate + L-glutamate. The catalysed reaction is L-valine + 2-oxoglutarate = 3-methyl-2-oxobutanoate + L-glutamate. Catalyzes the first reaction in the catabolism of the essential branched chain amino acids leucine, isoleucine, and valine. May also function as a transporter of branched chain alpha-keto acids. The polypeptide is Branched-chain-amino-acid aminotransferase, mitochondrial (Bcat2) (Rattus norvegicus (Rat)).